The chain runs to 342 residues: scyllo-inositol 2-dehydrogenase (NAD(+)) (342 aa).

This sequence belongs to the Gfo/Idh/MocA family.

It carries out the reaction scyllo-inositol + NAD(+) = scyllo-inosose + NADH + H(+). It participates in polyol metabolism. Catalyzes the reversible NAD(+)-dependent oxidation of scyllo-inositol (SI) to 2,4,6/3,5-pentahydroxycyclohexanone (scyllo-inosose or SIS). Is required for SI catabolism that allows B.subtilis to utilize SI as the sole carbon source for growth. Cannot use NADP(+) instead of NAD(+). The chain is scyllo-inositol 2-dehydrogenase (NAD(+)) from Bacillus subtilis (strain 168).